The primary structure comprises 311 residues: MRVCYFVLVPSVALAVIATESSETSGTIVHVFPLRDVADHRNDALINRALRAQTALDDDEERWPFGPSAVEALIETIDRHGRVSLNDEAKMKKVVRTWKKLIERDDLIGEIGKHYFEAPGPLHDTYDEALATRLVTTYSDRGVARAILHTRPSDPLSKKAGQAHRLEEAVASLWKGRGYTSDNVVSSIATGHDVDFFAPTAFTFLVKCVESEDDANNAIFEYFGSNPSRYFSAVLHAMEKPDADSRVLESSKKWMFQCYAQKQFPTPVFERTLAAYQSEDYAIRGARNHYEKLSLSQIEELVEEYSRIYSV.

Positions 1-15 (MRVCYFVLVPSVALA) are cleaved as a signal peptide. The RxLR-dEER motif lies at 48 to 62 (RALRAQTALDDDEER). WY domain regions lie at residues 127–209 (DEAL…VKCV) and 210–311 (ESED…IYSV).

This sequence belongs to the RxLR effector family. In terms of assembly, monomer. Interacts with defense protein RPP1 from several ecotypes including RPP1-NdA, RPP1-WsB, RPP1-EstA and RPP1-ZdrA, via their leucine-rich repeats (LLRs).

It is found in the secreted. Its subcellular location is the host cytoplasm. In terms of biological role, secreted effector that acts as an elicitor of hypersensitive response (HR) specifically on plants carrying both defense protein RPP1 from several ecotypes including RPP1-NdA, RPP1-WsB, RPP1-EstA and RPP1-ZdrA. This is Avirulence protein ATR1 from Hyaloperonospora arabidopsidis (strain Emoy2) (Downy mildew agent).